The chain runs to 523 residues: Probable FAD synthase (523 aa).

Positions 20–111 (AIVVIGDEIL…TDQLHFSDEI (92 aa)) are molybdenum cofactor biosynthesis protein-like. The FAD synthase stretch occupies residues 332–489 (QIALSFNGGK…SLGGRDNTVK (158 aa)).

This sequence in the N-terminal section; belongs to the MoaB/Mog family. It in the C-terminal section; belongs to the PAPS reductase family. FAD1 subfamily. The cofactor is Mg(2+).

The catalysed reaction is FMN + ATP + H(+) = FAD + diphosphate. It functions in the pathway cofactor biosynthesis; FAD biosynthesis; FAD from FMN: step 1/1. Catalyzes the adenylation of flavin mononucleotide (FMN) to form flavin adenine dinucleotide (FAD) coenzyme. This is Probable FAD synthase from Caenorhabditis briggsae.